Consider the following 519-residue polypeptide: Bifunctional dihydrofolate reductase-thymidylate synthase 1 (519 aa).

Alanine 2 carries the N-acetylalanine modification. One can recognise a DHFR domain in the interval 21 to 198; that stretch reads TYQVVVAATK…LRFCFTTFVR (178 aa). A substrate-binding site is contributed by valine 25. Residues alanine 27 and 33–39 contribute to the NADP(+) site; that span reads GIGKDGK. Aspartate 47 is a substrate binding site. NADP(+) contacts are provided by residues 71 to 73 and 92 to 95; these read RKT and LTRS. Residue isoleucine 134 coordinates substrate. 135-142 is a binding site for NADP(+); the sequence is GGGDILRE. Threonine 155 provides a ligand contact to substrate. The segment at 201-234 is hinge; the sequence is SSADESSDESNGSQSLQFDGKKFLFLPKMVFDQH. The segment at 235–519 is thymidylate synthase; the sequence is EEFLYLNMVE…HKKIEMKMAV (285 aa). Position 256 (arginine 256) interacts with dUMP. Cysteine 401 is a catalytic residue. Residues histidine 402, 420-424, asparagine 432, and 462-464 contribute to the dUMP site; these read QRSAD and HVY.

In the N-terminal section; belongs to the dihydrofolate reductase family. The protein in the C-terminal section; belongs to the thymidylate synthase family. In terms of assembly, heterodimer or homodimer.

The catalysed reaction is (6S)-5,6,7,8-tetrahydrofolate + NADP(+) = 7,8-dihydrofolate + NADPH + H(+). The enzyme catalyses dUMP + (6R)-5,10-methylene-5,6,7,8-tetrahydrofolate = 7,8-dihydrofolate + dTMP. It functions in the pathway cofactor biosynthesis; tetrahydrofolate biosynthesis; 5,6,7,8-tetrahydrofolate from 7,8-dihydrofolate: step 1/1. In terms of biological role, bifunctional enzyme. Involved in de novo dTMP biosynthesis. Key enzyme in folate metabolism. Can play two different roles depending on the source of dihydrofolate: de novo synthesis of tetrahydrofolate or recycling of the dihydrofolate released as one of the end products of the TS catalyzed reaction. Catalyzes an essential reaction for de novo glycine and purine synthesis, DNA precursor synthesis, and for the conversion of dUMP to dTMP. The protein is Bifunctional dihydrofolate reductase-thymidylate synthase 1 (THY-1) of Arabidopsis thaliana (Mouse-ear cress).